The primary structure comprises 426 residues: Enolase (426 aa).

Glutamine 163 is a (2R)-2-phosphoglycerate binding site. Catalysis depends on glutamate 205, which acts as the Proton donor. Aspartate 242, glutamate 286, and aspartate 313 together coordinate Mg(2+). The (2R)-2-phosphoglycerate site is built by lysine 338, arginine 367, serine 368, and lysine 389. Lysine 338 serves as the catalytic Proton acceptor.

The protein belongs to the enolase family. The cofactor is Mg(2+).

The protein resides in the cytoplasm. Its subcellular location is the secreted. It is found in the cell surface. It carries out the reaction (2R)-2-phosphoglycerate = phosphoenolpyruvate + H2O. It participates in carbohydrate degradation; glycolysis; pyruvate from D-glyceraldehyde 3-phosphate: step 4/5. Catalyzes the reversible conversion of 2-phosphoglycerate (2-PG) into phosphoenolpyruvate (PEP). It is essential for the degradation of carbohydrates via glycolysis. In Syntrophobacter fumaroxidans (strain DSM 10017 / MPOB), this protein is Enolase.